Reading from the N-terminus, the 655-residue chain is Hepatocyte growth factor activator serine protease (655 aa).

The first 35 residues, 1 to 35 (MGRWAWVPSPWPPPGLGPFLLLLLLLLLLPRGFQP), serve as a signal peptide directing secretion. A propeptide spans 36 to 372 (QPGGNRTESP…RLEACESLTR (337 aa)) (removed in mature form). N-linked (GlcNAc...) asparagine glycans are attached at residues Asn40 and Asn48. Residues 64–102 (TSETPATSAPEAEGPQSGGLPPPPRAVPSSSSPQAQALT) form a disordered region. Residues 103–150 (EDGRPCRFPFRYGGRMLHACTSEGSAHRKWCATTHNYDRDRAWGYCVE) form the Fibronectin type-II domain. 19 disulfides stabilise this stretch: Cys108–Cys133, Cys122–Cys148, Cys164–Cys175, Cys169–Cys186, Cys188–Cys197, Cys202–Cys230, Cys228–Cys237, Cys245–Cys256, Cys250–Cys267, Cys269–Cys278, Cys286–Cys367, Cys307–Cys349, Cys338–Cys362, Cys394–Cys521, Cys432–Cys448, Cys440–Cys510, Cys535–Cys604, Cys567–Cys583, and Cys594–Cys622. The 39-residue stretch at 160-198 (ALDPCASGPCLNGGSCSNTQDPQSYHCSCPRAFTGKDCG) folds into the EGF-like 1 domain. The Fibronectin type-I domain occupies 200–240 (EKCFDETRYEYLEGGDRWARVRQGHVEQCECFGGRTWCEGT). In terms of domain architecture, EGF-like 2 spans 241 to 279 (RHTACLSSPCLNGGTCHLIVATGTTVCACPPGFAGRLCN). The 82-residue stretch at 286–367 (CFLGNGTGYR…SWEYCRLEAC (82 aa)) folds into the Kringle domain. N-linked (GlcNAc...) asparagine glycosylation is present at Asn290. In terms of domain architecture, Peptidase S1 spans 408-646 (IIGGSSSLPG…YVDWINDRIR (239 aa)). Residue His447 is the Charge relay system of the active site. Residues Asn468 and Asn492 are each glycosylated (N-linked (GlcNAc...) asparagine). The Charge relay system role is filled by Asp497. N-linked (GlcNAc...) asparagine glycosylation is present at Asn546. Residue Ser598 is the Charge relay system of the active site.

The protein belongs to the peptidase S1 family. Heterodimer of a short chain and a long chain linked by a disulfide bond. In terms of processing, the active form of HGFAC presents in the serum is derived from the COOH-terminal region of the precursor by the cleavage of bonds between Arg-372 and Val-373 and Arg-407 and Ile-408. As to expression, liver.

It is found in the secreted. In terms of biological role, serine protease that hydrolyzes the inactive zymogen hepatocyte growth factor (HGFsc) to an activated disulfide-linked heterodimer, then initiating hepatocyte growth factor receptor signaling pathway. The sequence is that of Hepatocyte growth factor activator serine protease from Homo sapiens (Human).